A 112-amino-acid chain; its full sequence is Integration host factor subunit alpha (112 aa).

It belongs to the bacterial histone-like protein family. As to quaternary structure, heterodimer of an alpha and a beta chain.

Functionally, this protein is one of the two subunits of integration host factor, a specific DNA-binding protein that functions in genetic recombination as well as in transcriptional and translational control. In Rhizobium leguminosarum bv. trifolii (strain WSM2304), this protein is Integration host factor subunit alpha.